A 170-amino-acid polypeptide reads, in one-letter code: Ribosome maturation factor RimM (170 aa).

The region spanning 98–170 is the PRC barrel domain; the sequence is PDEYYWVDLE…LIVVDWDPDF (73 aa).

This sequence belongs to the RimM family. As to quaternary structure, binds ribosomal protein uS19.

It is found in the cytoplasm. Its function is as follows. An accessory protein needed during the final step in the assembly of 30S ribosomal subunit, possibly for assembly of the head region. Essential for efficient processing of 16S rRNA. May be needed both before and after RbfA during the maturation of 16S rRNA. It has affinity for free ribosomal 30S subunits but not for 70S ribosomes. This chain is Ribosome maturation factor RimM, found in Xanthomonas campestris pv. campestris (strain 8004).